A 473-amino-acid polypeptide reads, in one-letter code: Cysteine--tRNA ligase (473 aa).

Zn(2+) is bound at residue Cys28. A 'HIGH' region motif is present at residues 30 to 40; it reads PTVYNYIHIGN. Zn(2+)-binding residues include Cys210, His235, and Glu239. The short motif at 267 to 271 is the 'KMSKS' region element; it reads KMSKS. Lys270 provides a ligand contact to ATP.

This sequence belongs to the class-I aminoacyl-tRNA synthetase family. As to quaternary structure, monomer. Requires Zn(2+) as cofactor.

The protein resides in the cytoplasm. The enzyme catalyses tRNA(Cys) + L-cysteine + ATP = L-cysteinyl-tRNA(Cys) + AMP + diphosphate. This chain is Cysteine--tRNA ligase, found in Fusobacterium nucleatum subsp. nucleatum (strain ATCC 25586 / DSM 15643 / BCRC 10681 / CIP 101130 / JCM 8532 / KCTC 2640 / LMG 13131 / VPI 4355).